Consider the following 84-residue polypeptide: ATP synthase subunit c (84 aa).

2 helical membrane passes run 9 to 29 (IIGASILLAFAALGTAIGFAI) and 54 to 74 (IVAGLLDAIAMIAVGISLLFI).

Belongs to the ATPase C chain family. As to quaternary structure, F-type ATPases have 2 components, F(1) - the catalytic core - and F(0) - the membrane proton channel. F(1) has five subunits: alpha(3), beta(3), gamma(1), delta(1), epsilon(1). F(0) has three main subunits: a(1), b(2) and c(10-14). The alpha and beta chains form an alternating ring which encloses part of the gamma chain. F(1) is attached to F(0) by a central stalk formed by the gamma and epsilon chains, while a peripheral stalk is formed by the delta and b chains.

The protein resides in the cell inner membrane. Its function is as follows. F(1)F(0) ATP synthase produces ATP from ADP in the presence of a proton or sodium gradient. F-type ATPases consist of two structural domains, F(1) containing the extramembraneous catalytic core and F(0) containing the membrane proton channel, linked together by a central stalk and a peripheral stalk. During catalysis, ATP synthesis in the catalytic domain of F(1) is coupled via a rotary mechanism of the central stalk subunits to proton translocation. Functionally, key component of the F(0) channel; it plays a direct role in translocation across the membrane. A homomeric c-ring of between 10-14 subunits forms the central stalk rotor element with the F(1) delta and epsilon subunits. This is ATP synthase subunit c from Haemophilus influenzae (strain ATCC 51907 / DSM 11121 / KW20 / Rd).